A 260-amino-acid polypeptide reads, in one-letter code: Dehydrin ERD10 (260 aa).

3 disordered regions span residues Met-1–Lys-187, Lys-197–Leu-216, and Lys-240–Asp-260. Ala-2 carries the post-translational modification N-acetylalanine. A compositionally biased stretch (basic and acidic residues) spans Glu-26–Pro-44. Ser-61 is subject to Phosphoserine. Basic and acidic residues-rich tracts occupy residues Val-67 to His-102, Ile-130 to Glu-140, Asp-148 to Gly-162, Ser-176 to Lys-187, and Lys-197 to Asp-207. A run of 2 repeats spans residues Glu-184–Lys-204 and Pro-227–Lys-247. The tract at residues Glu-184–Lys-247 is 2 X 21 AA repeats, Lys-rich.

Belongs to the plant dehydrin family. As to expression, in stems, cauline leaves, roots and flowers. Low levels found in maturing seeds. Absent in dry seeds.

The polypeptide is Dehydrin ERD10 (ERD10) (Arabidopsis thaliana (Mouse-ear cress)).